The chain runs to 397 residues: Acetate kinase (397 aa).

N7 contributes to the Mg(2+) binding site. An ATP-binding site is contributed by K14. R91 is a binding site for substrate. The Proton donor/acceptor role is filled by D147. Residues 207–211 (HLGNG), 282–284 (DFR), and 330–334 (GLGEN) contribute to the ATP site. E383 serves as a coordination point for Mg(2+).

This sequence belongs to the acetokinase family. As to quaternary structure, homodimer. Requires Mg(2+) as cofactor. Mn(2+) is required as a cofactor.

It localises to the cytoplasm. It catalyses the reaction acetate + ATP = acetyl phosphate + ADP. It participates in metabolic intermediate biosynthesis; acetyl-CoA biosynthesis; acetyl-CoA from acetate: step 1/2. Functionally, catalyzes the formation of acetyl phosphate from acetate and ATP. Can also catalyze the reverse reaction. The polypeptide is Acetate kinase (Moorella thermoacetica (strain ATCC 39073 / JCM 9320)).